The primary structure comprises 158 residues: Probable cyclic pyranopterin monophosphate synthase (158 aa).

Residues 78-80 and 114-115 contribute to the substrate site; these read MCH and ME. The active site involves D129.

Belongs to the MoaC family. In terms of assembly, homohexamer; trimer of dimers.

The catalysed reaction is (8S)-3',8-cyclo-7,8-dihydroguanosine 5'-triphosphate = cyclic pyranopterin phosphate + diphosphate. It participates in cofactor biosynthesis; molybdopterin biosynthesis. In terms of biological role, catalyzes the conversion of (8S)-3',8-cyclo-7,8-dihydroguanosine 5'-triphosphate to cyclic pyranopterin monophosphate (cPMP). This chain is Probable cyclic pyranopterin monophosphate synthase, found in Methanosarcina acetivorans (strain ATCC 35395 / DSM 2834 / JCM 12185 / C2A).